Reading from the N-terminus, the 386-residue chain is Probable copper-dependent oxygenase M1 (386 aa).

An N-terminal signal peptide occupies residues 1 to 22 (MLRMKKICTAFLTIALCTHVLA). N86 carries an N-linked (GlcNAc...) asparagine glycan. A helical membrane pass occupies residues 334–354 (FVVPIAAIAFIALTIGAGYVF).

This sequence belongs to the clz3 oxygenase family.

The protein localises to the membrane. It participates in secondary metabolite biosynthesis. In terms of biological role, probable copper-dependent oxygenase; part of the gene cluster that mediates the biosynthesis of squalestatin S1 (SQS1, also known as zaragozic acid A), a heavily oxidized fungal polyketide that offers potent cholesterol lowering activity by targeting squalene synthase (SS). SQS1 is composed of a 2,8-dioxobicyclic[3.2.1]octane-3,4,5-tricarboxyclic acid core that is connected to two lipophilic polyketide arms. These initial steps feature the priming of an unusual benzoic acid starter unit onto the highly reducing polyketide synthase pks2, followed by oxaloacetate extension and product release to generate a tricarboxylic acid containing product. The phenylalanine ammonia lyase (PAL) M7 and the acyl-CoA ligase M9 are involved in transforming phenylalanine into benzoyl-CoA. The citrate synthase-like protein R3 is involved in connecting the C-alpha-carbons of the hexaketide chain and oxaloacetate to afford the tricarboxylic acid unit. The potential hydrolytic enzymes, M8 and M10, are in close proximity to pks2 and may participate in product release. On the other side, the tetraketide arm is synthesized by a the squalestatin tetraketide synthase pks1 and enzymatically esterified to the core in the last biosynthetic step, by the acetyltransferase M4. The biosynthesis of the tetraketide must involve 3 rounds of chain extension. After the first and second rounds methyl-transfer occurs, and in all rounds of extension the ketoreductase and dehydratase are active. The enoyl reductase and C-MeT of pks1 are not active in the final round of extension. The acetyltransferase M4 appears to have a broad substrate selectivity for its acyl CoA substrate, allowing the in vitro synthesis of novel squalestatins. The biosynthesis of SQS1 requires several oxidative steps likely performed by oxidoreductases M1, R1 and R2. Finally, in support of the identification of the cluster as being responsible for SQS1 production, the cluster contains a gene encoding a putative squalene synthase (SS) R6, suggesting a likely mechanism for self-resistance. This Phoma sp. (strain ATCC 20986 / MF5453) protein is Probable copper-dependent oxygenase M1.